Consider the following 258-residue polypeptide: SufE-like protein 2, chloroplastic (258 aa).

A disordered region spans residues 1–32; sequence MNTSSSFKALASPPLISTSRPTTKSFPNPRFT. A compositionally biased stretch (polar residues) spans 15–32; that stretch reads LISTSRPTTKSFPNPRFT. Catalysis depends on cysteine 122, which acts as the Cysteine persulfide intermediate.

The protein belongs to the SufE family. As to expression, highly expressed in flowers and pollen, and at low levels in roots, leaves and stems.

The protein localises to the plastid. Its subcellular location is the chloroplast. It functions in the pathway cofactor biosynthesis; iron-sulfur cluster biosynthesis. Functionally, participates in cysteine desulfurization mediated by NFS2. Can activate the cysteine desulfurase activity of NFS2 in vitro. Cysteine desulfurization mobilizes sulfur from L-cysteine to yield L-alanine and supplies the inorganic sulfur for iron-sulfur (Fe-S) cluster formation. The sequence is that of SufE-like protein 2, chloroplastic (SUFE2) from Arabidopsis thaliana (Mouse-ear cress).